The chain runs to 102 residues: Large ribosomal subunit protein bL21 (102 aa).

It belongs to the bacterial ribosomal protein bL21 family. Part of the 50S ribosomal subunit. Contacts protein L20.

Functionally, this protein binds to 23S rRNA in the presence of protein L20. The sequence is that of Large ribosomal subunit protein bL21 from Finegoldia magna (strain ATCC 29328 / DSM 20472 / WAL 2508) (Peptostreptococcus magnus).